The following is a 676-amino-acid chain: Zinc finger CCCH domain-containing protein 38 (676 aa).

Disordered regions lie at residues 1-134 (MEMS…DHLF), 172-217 (SSDY…RSSN), 245-307 (RKQP…SWID), 487-506 (SVQP…NPNQ), and 533-594 (IQEV…DPKG). Residues 12 to 21 (SKWDSKEDTH) show a composition bias toward basic and acidic residues. Residues 58–79 (RVSQNNDNSYFSEQDGTRQQFV) show a composition bias toward polar residues. 3 stretches are compositionally biased toward basic and acidic residues: residues 101-110 (ARRDAGSYDR), 124-134 (EFNKRGSDHLF), and 192-212 (SEFT…EGGF). Residues 214–243 (RSSNIPCKFFAAGTGFCRNGKYCRFSHHVA) form a C3H1-type zinc finger. Residues 251–262 (NNNNFYRQDNNN) are compositionally biased toward low complexity. The segment covering 269–278 (KWNDVERLDN) has biased composition (basic and acidic residues). The span at 538-562 (LDPKENGDKKTDEASKEEEGKKTGE) shows a compositional bias: basic and acidic residues. The span at 563–583 (DTNDAENVVDEDEDGDDDGSD) shows a compositional bias: acidic residues. Positions 584–594 (EENKKEKDPKG) are enriched in basic and acidic residues.

This chain is Zinc finger CCCH domain-containing protein 38, found in Arabidopsis thaliana (Mouse-ear cress).